A 605-amino-acid chain; its full sequence is Exonuclease V, mitochondrial (605 aa).

The transit peptide at 1–17 (MSLNFLKRYLSRSTRNF) directs the protein to the mitochondrion. Residues Cys140, Cys563, Cys566, and Cys572 each coordinate [4Fe-4S] cluster.

This sequence belongs to the EXO5 family. Monomer. It depends on Mg(2+) as a cofactor. [4Fe-4S] cluster serves as cofactor.

It is found in the mitochondrion. Its function is as follows. Single strand DNA specific 5' exonuclease involved in mitochondrial DNA replication and recombination. Releases dinucleotides as main products of catalysis. Has the capacity to slide across 5'double-stranded DNA or 5'RNA sequences and resumes cutting two nucleotides downstream of the double-stranded-to-single-stranded junction or RNA-to-DNA junction, respectively. In Candida tropicalis (strain ATCC MYA-3404 / T1) (Yeast), this protein is Exonuclease V, mitochondrial (EXO5).